The chain runs to 612 residues: Polyadenylation factor subunit 2 (612 aa).

A disordered region spans residues 1-21 (MAYEPRGDHGGGGGGQGQDGA). WD repeat units follow at residues 93–132 (KIKHPINVVRWTPEGRRLLTASTSGEFTLWNGTGFNFETI), 135–175 (AHDS…QSIN), 177–215 (HTDPIRDLAFSPSDSKFVTASDDSTLKIFDFALGQMESK), 218–257 (GHGWDAKSVDWHPTKGLLVSGSKDHLVKLWDPRTSRCLTT), 260–300 (GHKS…DICL), 303–345 (GHEK…PGQS), and 373–412 (AHDYAIWSLDWHPLGHILASGSNDRITRFWSRARPGDAEV). Disordered stretches follow at residues 424–450 (AEAQGTWDRRGGRRQRQEEEQQEMEDE), 486–514 (PPPPIPGVGAGGPPPPLPFPLPGLNGSLP), and 544–612 (PPPG…TRAR). Residues 430 to 442 (WDRRGGRRQRQEE) are compositionally biased toward basic and acidic residues. Composition is skewed to pro residues over residues 486–506 (PPPPIPGVGAGGPPPPLPFPL) and 544–575 (PPPGALPPGLLPPGGIPPPPGGFGMPIPPPPM).

The protein localises to the nucleus. In terms of biological role, required for 3'-end cleavage and polyadenylation of pre-mRNAs. Also involved in chromosome segregation where it has a role in chromosome attachment to the mitotic spindle. This is Polyadenylation factor subunit 2 (PFS2) from Gibberella zeae (strain ATCC MYA-4620 / CBS 123657 / FGSC 9075 / NRRL 31084 / PH-1) (Wheat head blight fungus).